Reading from the N-terminus, the 91-residue chain is MVVKTWMPWLLVSSVLSQGCCQHWSFGLSPGGKRELKYFPNTLENQIRLLNSNTPCSDLSHLEESSLAKIYRIKGLLGSVTEAKNGYRTYK.

The signal sequence occupies residues 1 to 21 (MVVKTWMPWLLVSSVLSQGCC). Position 22 is a pyrrolidone carboxylic acid (Gln-22). Glycine amide is present on Gly-31.

It belongs to the GnRH family. Expressed in the cell bodies of a cluster of neurons in the preoptic region.

The protein localises to the secreted. In terms of biological role, stimulates the secretion of gonadotropins. The sequence is that of Progonadoliberin-1 (gnrh1) from Oryzias latipes (Japanese rice fish).